The following is a 464-amino-acid chain: Peptidase inhibitor 16 (464 aa).

The N-terminal stretch at 1-27 is a signal peptide; that stretch reads MHGSGSLLACLLPPLLLLGAAPGPAGA. The 129-residue stretch at 37–165 folds into the SCP domain; sequence VELHNLYRTQ…TNIHLLVCNY (129 aa). N-linked (GlcNAc...) asparagine glycosylation occurs at asparagine 114. Disordered stretches follow at residues 208-241, 260-281, 304-347, and 386-412; these read DLSS…TEPP, VETK…TKTP, PATL…LMGT, and TTLK…ANAV. Residues 311-325 show a composition bias toward basic and acidic residues; the sequence is STHDPIPKSADKEAS. Over residues 395–411 the composition is skewed to low complexity; that stretch reads SSKSLSNSPSASATANA.

Belongs to the CRISP family. As to quaternary structure, interacts with PSP94/MSMB. In terms of processing, N-glycosylated.

The protein resides in the secreted. May inhibit cardiomyocyte growth. This is Peptidase inhibitor 16 (PI16) from Bos taurus (Bovine).